Reading from the N-terminus, the 282-residue chain is Protoheme IX farnesyltransferase (282 aa).

9 helical membrane passes run 9 to 29, 39 to 59, 79 to 99, 102 to 122, 139 to 159, 165 to 185, 210 to 230, 231 to 251, and 261 to 281; these read LAKP…FLLA, LPLF…GCVF, LVTG…LLIL, LVLY…GFIV, VLGG…VVNI, LALF…IAML, IMLF…VLGS, ADLF…YKSI, and VFAK…CLTM.

It belongs to the UbiA prenyltransferase family. Protoheme IX farnesyltransferase subfamily.

The protein resides in the cell inner membrane. It carries out the reaction heme b + (2E,6E)-farnesyl diphosphate + H2O = Fe(II)-heme o + diphosphate. The protein operates within porphyrin-containing compound metabolism; heme O biosynthesis; heme O from protoheme: step 1/1. Functionally, converts heme B (protoheme IX) to heme O by substitution of the vinyl group on carbon 2 of heme B porphyrin ring with a hydroxyethyl farnesyl side group. This is Protoheme IX farnesyltransferase from Francisella tularensis subsp. holarctica (strain LVS).